We begin with the raw amino-acid sequence, 363 residues long: MSIEINNISKYFGRTKVLNDITLDIPSGQMVALLGPSGSGKTTLLRIIAGLENQNAGRLSFHGTDVSRLHARDRRVGFVFQHYALFRHMTVFDNIAFGLTVLPRRERPNAAAIKQKVGQLLEMVQLGHLAERFPSQLSGGQKQRVALARALAVEPQILLLDEPFGALDAQVRKELRRWLRQLHEELKFTSVFVTHDQEEAMEVADRVVVVSQGNIEQVGTPDEVWREPATRFVLEFLGEVNRLSGEIRGSQLFIGAHHWPLDLAPMHQGSVDLFLRPWEMEVSTQSSDRCPLPVQVLEVSPRGHFWQLTVQPIGWHQDPISVVLPEGNIDAPVRGNRYYVGGLNARLYSGNQLLQPIALAQSA.

An ABC transporter domain is found at 3–237 (IEINNISKYF…PATRFVLEFL (235 aa)). Residue 35 to 42 (GPSGSGKT) participates in ATP binding.

The protein belongs to the ABC transporter superfamily. Sulfate/tungstate importer (TC 3.A.1.6) family. The complex is composed of two ATP-binding proteins (CysA), two transmembrane proteins (CysT and CysW) and a solute-binding protein (CysP).

It is found in the cell inner membrane. It catalyses the reaction sulfate(out) + ATP + H2O = sulfate(in) + ADP + phosphate + H(+). The catalysed reaction is thiosulfate(out) + ATP + H2O = thiosulfate(in) + ADP + phosphate + H(+). Part of the ABC transporter complex CysAWTP involved in sulfate/thiosulfate import. Responsible for energy coupling to the transport system. This is Sulfate/thiosulfate import ATP-binding protein CysA from Yersinia pestis.